The primary structure comprises 237 residues: UPF0502 protein HEAR1280 (237 aa).

Positions 1–13 (MNTEVMHSTSTES) are enriched in polar residues. Residues 1-21 (MNTEVMHSTSTESDAQEKPQA) are disordered.

The protein belongs to the UPF0502 family.

The sequence is that of UPF0502 protein HEAR1280 from Herminiimonas arsenicoxydans.